The sequence spans 229 residues: Cytochrome c oxidase subunit 2 (229 aa).

Over 1–26 (MATWSNLGLQDSASPLMEQLNFFHDH) the chain is Mitochondrial intermembrane. Residues 27 to 48 (TLLILIMITILVGYLMLMLFFN) form a helical membrane-spanning segment. The Mitochondrial matrix portion of the chain corresponds to 49-62 (KFTNRFLLHGQTIE). The helical transmembrane segment at 63–82 (IIWTILPAIVLMFIALPSLR) threads the bilayer. Residues 83–229 (ILYLLDEINS…IKWITAMNSN (147 aa)) lie on the Mitochondrial intermembrane side of the membrane. H161, C196, E198, C200, H204, and M207 together coordinate Cu cation. E198 provides a ligand contact to Mg(2+).

This sequence belongs to the cytochrome c oxidase subunit 2 family. As to quaternary structure, component of the cytochrome c oxidase (complex IV, CIV), a multisubunit enzyme composed of a catalytic core of 3 subunits and several supernumerary subunits. The complex exists as a monomer or a dimer and forms supercomplexes (SCs) in the inner mitochondrial membrane with ubiquinol-cytochrome c oxidoreductase (cytochrome b-c1 complex, complex III, CIII). It depends on Cu cation as a cofactor.

It is found in the mitochondrion inner membrane. It catalyses the reaction 4 Fe(II)-[cytochrome c] + O2 + 8 H(+)(in) = 4 Fe(III)-[cytochrome c] + 2 H2O + 4 H(+)(out). Functionally, component of the cytochrome c oxidase, the last enzyme in the mitochondrial electron transport chain which drives oxidative phosphorylation. The respiratory chain contains 3 multisubunit complexes succinate dehydrogenase (complex II, CII), ubiquinol-cytochrome c oxidoreductase (cytochrome b-c1 complex, complex III, CIII) and cytochrome c oxidase (complex IV, CIV), that cooperate to transfer electrons derived from NADH and succinate to molecular oxygen, creating an electrochemical gradient over the inner membrane that drives transmembrane transport and the ATP synthase. Cytochrome c oxidase is the component of the respiratory chain that catalyzes the reduction of oxygen to water. Electrons originating from reduced cytochrome c in the intermembrane space (IMS) are transferred via the dinuclear copper A center (CU(A)) of subunit 2 and heme A of subunit 1 to the active site in subunit 1, a binuclear center (BNC) formed by heme A3 and copper B (CU(B)). The BNC reduces molecular oxygen to 2 water molecules using 4 electrons from cytochrome c in the IMS and 4 protons from the mitochondrial matrix. The polypeptide is Cytochrome c oxidase subunit 2 (COII) (Simulium vittatum (Striped black fly)).